The following is a 199-amino-acid chain: NAD(P)H dehydrogenase (quinone) (199 aa).

One can recognise a Flavodoxin-like domain in the interval Val4–Ile190. FMN is bound by residues Ser10–Ile15 and Thr78–Phe80. Tyr12 is a binding site for NAD(+). Trp98 provides a ligand contact to substrate. FMN contacts are provided by residues Ser113–Gly119 and His134.

Belongs to the WrbA family. FMN is required as a cofactor.

It carries out the reaction a quinone + NADH + H(+) = a quinol + NAD(+). The catalysed reaction is a quinone + NADPH + H(+) = a quinol + NADP(+). The protein is NAD(P)H dehydrogenase (quinone) of Nitrobacter winogradskyi (strain ATCC 25391 / DSM 10237 / CIP 104748 / NCIMB 11846 / Nb-255).